A 310-amino-acid polypeptide reads, in one-letter code: MTVTVRVSAKVNLALGVGGLAPDGFHPLATVFEAICIYDEVAVTRRDDSRITLTVSGEDADQVPTDETNLAWRAVELVREEFASEWGKRGHGADIHIDKSIPVAGGMAGGSADAAGALMAAAALCRLPYSPEELQPLAAQLGSDVPFCLTGGVALGRGRGDRLAPVICRGRHRWVFATSNQGLSTPAVYRRFDELGGTPGGETVPNDLISALTRGDLDAVAASLSNDLQAAAIDLRPELEEVLTVGREVGALTALVSGSGPTCAFLVRDTAGAKKVSAAVSNLPQVHRTRTARGPAAGAQLLPGPVGSFA.

The active site involves lysine 10. 102-112 (PVAGGMAGGSA) lines the ATP pocket. Residue aspartate 144 is part of the active site. A disordered region spans residues 289–310 (TRTARGPAAGAQLLPGPVGSFA).

The protein belongs to the GHMP kinase family. IspE subfamily.

The enzyme catalyses 4-CDP-2-C-methyl-D-erythritol + ATP = 4-CDP-2-C-methyl-D-erythritol 2-phosphate + ADP + H(+). It participates in isoprenoid biosynthesis; isopentenyl diphosphate biosynthesis via DXP pathway; isopentenyl diphosphate from 1-deoxy-D-xylulose 5-phosphate: step 3/6. Catalyzes the phosphorylation of the position 2 hydroxy group of 4-diphosphocytidyl-2C-methyl-D-erythritol. The protein is 4-diphosphocytidyl-2-C-methyl-D-erythritol kinase of Cutibacterium acnes (strain DSM 16379 / KPA171202) (Propionibacterium acnes).